A 447-amino-acid polypeptide reads, in one-letter code: Methylenetetrahydrofolate--tRNA-(uracil-5-)-methyltransferase TrmFO (447 aa).

Position 8–13 (8–13) interacts with FAD; that stretch reads GGGLAG. Residues 398–421 form a disordered region; that stretch reads NWGLVPAPPKRENGRRLGRQERRR. Residues 406-417 show a composition bias toward basic and acidic residues; sequence PKRENGRRLGRQ.

Belongs to the MnmG family. TrmFO subfamily. FAD is required as a cofactor.

It localises to the cytoplasm. It catalyses the reaction uridine(54) in tRNA + (6R)-5,10-methylene-5,6,7,8-tetrahydrofolate + NADH + H(+) = 5-methyluridine(54) in tRNA + (6S)-5,6,7,8-tetrahydrofolate + NAD(+). The enzyme catalyses uridine(54) in tRNA + (6R)-5,10-methylene-5,6,7,8-tetrahydrofolate + NADPH + H(+) = 5-methyluridine(54) in tRNA + (6S)-5,6,7,8-tetrahydrofolate + NADP(+). In terms of biological role, catalyzes the folate-dependent formation of 5-methyl-uridine at position 54 (M-5-U54) in all tRNAs. The chain is Methylenetetrahydrofolate--tRNA-(uracil-5-)-methyltransferase TrmFO from Rubrobacter xylanophilus (strain DSM 9941 / JCM 11954 / NBRC 16129 / PRD-1).